The primary structure comprises 151 residues: Brain ribonuclease (151 aa).

A disordered region spans residues 1–25 (KESAAAKFRRQHMDAGSSSSGNSNY). Substrate contacts are provided by Lys-7 and Arg-10. His-12 serves as the catalytic Proton acceptor. Intrachain disulfides connect Cys-26–Cys-84, Cys-40–Cys-95, Cys-58–Cys-110, and Cys-65–Cys-72. Position 41-45 (41-45 (KPVNT)) interacts with substrate. N-linked (GlcNAc...) asparagine glycosylation is present at Asn-62. Residues Lys-66 and Arg-85 each coordinate substrate. The active-site Proton donor is the His-119. O-linked (GalNAc...) threonine glycosylation occurs at Thr-129. O-linked (GalNAc...) serine glycosylation occurs at Ser-133.

It belongs to the pancreatic ribonuclease family.

Its subcellular location is the secreted. In Axis porcinus (Hog deer), this protein is Brain ribonuclease (BRN).